The chain runs to 660 residues: Epithelial sodium channel subunit gamma (660 aa).

The Cytoplasmic portion of the chain corresponds to 1–55 (MSKSGKKLTQKLKKNLPVTGPQAPTLYELMQWYCLNTNTHGCRRIVVSKGRLRRW). Residues 56–76 (IWISLTLCAVAVIFWQCALLL) form a helical membrane-spanning segment. Topologically, residues 77–537 (MSYYSVSASI…VTLLSNFGGQ (461 aa)) are extracellular. Disulfide bonds link Cys-101–Cys-286, Cys-209–Cys-217, Cys-263–Cys-270, Cys-375–Cys-460, Cys-397–Cys-456, Cys-401–Cys-452, Cys-410–Cys-437, and Cys-412–Cys-426. The chain crosses the membrane as a helical span at residues 538–558 (LGLWMSCSMICVLEIIEVFFI). Over 559–660 (DSFWVVLRQR…IDSDEDVERL (102 aa)) the chain is Cytoplasmic.

Belongs to the amiloride-sensitive sodium channel (TC 1.A.6) family. SCNN1G subfamily. In terms of assembly, component of the heterotrimeric epithelial sodium channel (ENaC) composed of an alpha/SCNN1A, a beta/SCNN1B and a gamma/SCNN1G subunit.

It localises to the apical cell membrane. The catalysed reaction is Na(+)(in) = Na(+)(out). Its activity is regulated as follows. Originally identified and characterized by its inhibition by the diuretic drug amiloride. Its function is as follows. This is one of the three pore-forming subunits of the heterotrimeric epithelial sodium channel (ENaC), a critical regulator of sodium balance and fluid homeostasis. ENaC operates in epithelial tissues, where it mediates the electrodiffusion of sodium ions from extracellular fluid through the apical membrane of cells, with water following osmotically. The protein is Epithelial sodium channel subunit gamma (scnn1g-a) of Xenopus laevis (African clawed frog).